The following is a 289-amino-acid chain: 5'-3' exonuclease (289 aa).

One can recognise a 5'-3' exonuclease domain in the interval 166–256 (VEPQKIPDYL…EEDLKIKRPD (91 aa)).

Functionally, 5'-3' exonuclease acting preferentially on double-stranded DNA. This chain is 5'-3' exonuclease, found in Aquifex aeolicus (strain VF5).